Here is a 90-residue protein sequence, read N- to C-terminus: Sec-independent protein translocase protein TatA (90 aa).

Residues 2–22 (GVGGISIWQLLIVLVIILLLF) traverse the membrane as a helical segment. Composition is skewed to basic and acidic residues over residues 45–68 (LRDEERRDAEEAATIEHKQAHKAE) and 76–90 (ADADFKIKSGNDEHK). Residues 45–90 (LRDEERRDAEEAATIEHKQAHKAENPSQRQQADADFKIKSGNDEHK) are disordered.

Belongs to the TatA/E family. In terms of assembly, the Tat system comprises two distinct complexes: a TatABC complex, containing multiple copies of TatA, TatB and TatC subunits, and a separate TatA complex, containing only TatA subunits. Substrates initially bind to the TatABC complex, which probably triggers association of the separate TatA complex to form the active translocon.

The protein resides in the cell inner membrane. Part of the twin-arginine translocation (Tat) system that transports large folded proteins containing a characteristic twin-arginine motif in their signal peptide across membranes. TatA could form the protein-conducting channel of the Tat system. This is Sec-independent protein translocase protein TatA from Nitrosococcus oceani (strain ATCC 19707 / BCRC 17464 / JCM 30415 / NCIMB 11848 / C-107).